We begin with the raw amino-acid sequence, 285 residues long: Probable endonuclease 4 (285 aa).

His-68, His-108, Glu-145, Asp-179, His-182, His-216, Asp-229, His-231, and Glu-261 together coordinate Zn(2+).

Belongs to the AP endonuclease 2 family. Zn(2+) serves as cofactor.

It catalyses the reaction Endonucleolytic cleavage to 5'-phosphooligonucleotide end-products.. In terms of biological role, endonuclease IV plays a role in DNA repair. It cleaves phosphodiester bonds at apurinic or apyrimidinic (AP) sites, generating a 3'-hydroxyl group and a 5'-terminal sugar phosphate. The polypeptide is Probable endonuclease 4 (Geotalea daltonii (strain DSM 22248 / JCM 15807 / FRC-32) (Geobacter daltonii)).